The following is a 178-amino-acid chain: Putative magnesium-dependent phosphatase YER134C (178 aa).

Asp-11 serves as the catalytic Nucleophile. Position 11 (Asp-11) interacts with Mg(2+). Residues Leu-12, Asp-13, Ser-74, and Arg-75 each contribute to the phosphate site. Asp-13 contacts Mg(2+). Asp-13 acts as the Proton donor in catalysis. A substrate-binding site is contributed by Arg-75. Asp-141 provides a ligand contact to Mg(2+).

Belongs to the HAD-like hydrolase superfamily.

It localises to the cytoplasm. It is found in the nucleus. It carries out the reaction O-phospho-L-tyrosyl-[protein] + H2O = L-tyrosyl-[protein] + phosphate. Functionally, magnesium-dependent phosphatase which may act as a tyrosine phosphatase. This Saccharomyces cerevisiae (strain ATCC 204508 / S288c) (Baker's yeast) protein is Putative magnesium-dependent phosphatase YER134C.